Here is a 648-residue protein sequence, read N- to C-terminus: Transketolase (648 aa).

Residue His22 coordinates substrate. Thiamine diphosphate is bound by residues His62 and 109-111 (GPL). Asp150 is a binding site for Mg(2+). Thiamine diphosphate contacts are provided by Gly151 and Asn180. The Mg(2+) site is built by Asn180 and Val182. The substrate site is built by His252, Arg345, and Ser372. His252 lines the thiamine diphosphate pocket. Glu397 functions as the Proton donor in the catalytic mechanism. Thiamine diphosphate is bound at residue Phe423. Substrate is bound by residues His447, Asp455, and Arg506.

It belongs to the transketolase family. As to quaternary structure, homodimer. The cofactor is Mg(2+). Requires Ca(2+) as cofactor. Mn(2+) serves as cofactor. It depends on Co(2+) as a cofactor. Thiamine diphosphate is required as a cofactor.

The catalysed reaction is D-sedoheptulose 7-phosphate + D-glyceraldehyde 3-phosphate = aldehydo-D-ribose 5-phosphate + D-xylulose 5-phosphate. Functionally, catalyzes the transfer of a two-carbon ketol group from a ketose donor to an aldose acceptor, via a covalent intermediate with the cofactor thiamine pyrophosphate. This chain is Transketolase (tkt), found in Mycoplasma pneumoniae (strain ATCC 29342 / M129 / Subtype 1) (Mycoplasmoides pneumoniae).